A 165-amino-acid chain; its full sequence is Crossover junction endodeoxyribonuclease RuvC (165 aa).

Catalysis depends on residues Asp7, Glu67, and Asp140. 3 residues coordinate Mg(2+): Asp7, Glu67, and Asp140.

The protein belongs to the RuvC family. In terms of assembly, homodimer which binds Holliday junction (HJ) DNA. The HJ becomes 2-fold symmetrical on binding to RuvC with unstacked arms; it has a different conformation from HJ DNA in complex with RuvA. In the full resolvosome a probable DNA-RuvA(4)-RuvB(12)-RuvC(2) complex forms which resolves the HJ. The cofactor is Mg(2+).

It is found in the cytoplasm. The catalysed reaction is Endonucleolytic cleavage at a junction such as a reciprocal single-stranded crossover between two homologous DNA duplexes (Holliday junction).. The RuvA-RuvB-RuvC complex processes Holliday junction (HJ) DNA during genetic recombination and DNA repair. Endonuclease that resolves HJ intermediates. Cleaves cruciform DNA by making single-stranded nicks across the HJ at symmetrical positions within the homologous arms, yielding a 5'-phosphate and a 3'-hydroxyl group; requires a central core of homology in the junction. The consensus cleavage sequence is 5'-(A/T)TT(C/G)-3'. Cleavage occurs on the 3'-side of the TT dinucleotide at the point of strand exchange. HJ branch migration catalyzed by RuvA-RuvB allows RuvC to scan DNA until it finds its consensus sequence, where it cleaves and resolves the cruciform DNA. The polypeptide is Crossover junction endodeoxyribonuclease RuvC (Halothermothrix orenii (strain H 168 / OCM 544 / DSM 9562)).